The sequence spans 448 residues: Proteases secretion protein PrtE (448 aa).

The Cytoplasmic segment spans residues 1–30 (MTGMDITTQDELNEAAMRDRASRDEERALR). Residues 31 to 50 (LGWWLVLAGFGGFLLWALLA) form a helical membrane-spanning segment. Residues 51 to 448 (PLDKGVAVQG…DRMHLALTEE (398 aa)) are Periplasmic-facing.

It belongs to the membrane fusion protein (MFP) (TC 8.A.1) family.

The protein resides in the cell inner membrane. Functionally, involved in the secretion of proteases A, B, C and G. In Dickeya chrysanthemi (Pectobacterium chrysanthemi), this protein is Proteases secretion protein PrtE (prtE).